Consider the following 477-residue polypeptide: Endogenous retrovirus group V member 1 Env polyprotein (477 aa).

Residues 1–21 form the signal peptide; that stretch reads MTEKFLFLYLSLLPMPLLSQA. The Extracellular portion of the chain corresponds to 22 to 321; the sequence is QWNENSLVSF…NTTQPRQKRA (300 aa). N-linked (GlcNAc...) asparagine glycosylation is present at N68. Residues 322-342 form a helical membrane-spanning segment; it reads LGLILAGMGAAIGMIAPWGGF. Topologically, residues 343–477 are cytoplasmic; that stretch reads TYHDVTLRNL…LLSPLWPLSL (135 aa).

Belongs to the gamma type-C retroviral envelope protein family. Expressed in placenta.

Its subcellular location is the membrane. The protein is Endogenous retrovirus group V member 1 Env polyprotein (ERVV-1) of Homo sapiens (Human).